Consider the following 123-residue polypeptide: UPF0102 protein CLD_2200 (123 aa).

Belongs to the UPF0102 family.

In Clostridium botulinum (strain Okra / Type B1), this protein is UPF0102 protein CLD_2200.